A 333-amino-acid polypeptide reads, in one-letter code: MGKDRLPELLQRSLSTNSSNSSSNGSLLLNVYSGTTEFIIGNTGGNNNSYSVVSQNSHSCSNNNSSTEPKDRSSSKMTQYGSNVDDILNPYTEIRQQLAQIAANLETMNRMAQTVNLRTFNENEMDELHNKNLRLGNQLMTRFNDFKANLPAENDYSLEARMKRTLFYGLHQTFINLWHKNELFLQNYETKVKKNLRLHTKIINSEASEQEIELLIENKTTKLFVDNFLQETEKERQTLREMMDRFNELRRLEKSIEEVHALFMRIQTLVMEQSEVIQRVEFHAQQATLHVDKGADELDQAEQHQKKARKKKIMLIVILAAVLLVLLLVGIYL.

Over 1 to 312 (MGKDRLPELL…QHQKKARKKK (312 aa)) the chain is Cytoplasmic. A compositionally biased stretch (low complexity) spans 50 to 66 (YSVVSQNSHSCSNNNSS). Residues 50-81 (YSVVSQNSHSCSNNNSSTEPKDRSSSKMTQYG) are disordered. Positions 91–116 (YTEIRQQLAQIAANLETMNRMAQTVN) form a coiled coil. In terms of domain architecture, t-SNARE coiled-coil homology spans 239 to 301 (LREMMDRFNE…DKGADELDQA (63 aa)). Residues 313–333 (IMLIVILAAVLLVLLLVGIYL) traverse the membrane as a helical; Anchor for type IV membrane protein segment.

The protein belongs to the syntaxin family.

Its subcellular location is the membrane. Potentially involved in docking of synaptic vesicles at presynaptic active zones. This is Syntaxin-4 from Drosophila melanogaster (Fruit fly).